Here is a 594-residue protein sequence, read N- to C-terminus: Protein REBELOTE (594 aa).

Residues 1-13 show a composition bias toward basic residues; the sequence is MGKLGKKARKFAK. Disordered regions lie at residues 1-21 and 35-58; these read MGKL…SVEK and AKRN…PKKR. 3 short sequence motifs (nuclear localization signal) span residues 8 to 15, 35 to 42, and 512 to 519; these read ARKFAKKN, AKRNERHQ, and LKKFHERS. The segment covering 36–58 has biased composition (basic and acidic residues); sequence KRNERHQAGDKQEKKVEQQPKKR.

Belongs to the NOC2 family. In terms of assembly, interacts with SWA2, NOC2 and NOC3 in both the nucleolus and nucleoplasm. Binds to ENAP1 and OBE1. As to expression, expressed at low levels in roots, shoots, leaves, stems, inflorescences, flowers and siliques, with highest levels dividing tissues.

The protein resides in the nucleus. It is found in the nucleolus. Its subcellular location is the nucleoplasm. Collaboratively with CYP40/SQN and ULT1, influences floral meristem (FM) determinacy in an AGAMOUS and SUPERMAN-dependent manner, thus contributing to the floral developmental homeostasis. This is Protein REBELOTE from Arabidopsis thaliana (Mouse-ear cress).